We begin with the raw amino-acid sequence, 339 residues long: Ribosomal RNA large subunit methyltransferase F (339 aa).

The segment at 1-26 is disordered; sequence MTAPSTPKPQRKKPKTATTAKPVVPR.

This sequence belongs to the methyltransferase superfamily. METTL16/RlmF family.

It localises to the cytoplasm. It catalyses the reaction adenosine(1618) in 23S rRNA + S-adenosyl-L-methionine = N(6)-methyladenosine(1618) in 23S rRNA + S-adenosyl-L-homocysteine + H(+). In terms of biological role, specifically methylates the adenine in position 1618 of 23S rRNA. This Pseudomonas fluorescens (strain SBW25) protein is Ribosomal RNA large subunit methyltransferase F.